The following is a 121-amino-acid chain: Large ribosomal subunit protein uL14 (121 aa).

This sequence belongs to the universal ribosomal protein uL14 family. In terms of assembly, part of the 50S ribosomal subunit. Forms a cluster with proteins L3 and L19. In the 70S ribosome, L14 and L19 interact and together make contacts with the 16S rRNA in bridges B5 and B8.

Its function is as follows. Binds to 23S rRNA. Forms part of two intersubunit bridges in the 70S ribosome. The polypeptide is Large ribosomal subunit protein uL14 (Akkermansia muciniphila (strain ATCC BAA-835 / DSM 22959 / JCM 33894 / BCRC 81048 / CCUG 64013 / CIP 107961 / Muc)).